Here is a 483-residue protein sequence, read N- to C-terminus: Regulatory protein ViaA (483 aa).

The protein belongs to the ViaA family. As to quaternary structure, homodimer. Interacts with RavA.

The protein localises to the cytoplasm. Its function is as follows. Component of the RavA-ViaA chaperone complex, which may act on the membrane to optimize the function of some of the respiratory chains. ViaA stimulates the ATPase activity of RavA. The polypeptide is Regulatory protein ViaA (Shigella sonnei (strain Ss046)).